The chain runs to 287 residues: Acetyl-coenzyme A carboxylase carboxyl transferase subunit beta (287 aa).

The 255-residue stretch at 33-287 (LFSKCPGCKH…TLLAFHGGQA (255 aa)) folds into the CoA carboxyltransferase N-terminal domain. The Zn(2+) site is built by Cys37, Cys40, Cys55, and Cys58. A C4-type zinc finger spans residues 37–58 (CPGCKHTIYQKDLGNDSVCPNC).

This sequence belongs to the AccD/PCCB family. Acetyl-CoA carboxylase is a heterohexamer composed of biotin carboxyl carrier protein (AccB), biotin carboxylase (AccC) and two subunits each of ACCase subunit alpha (AccA) and ACCase subunit beta (AccD). Requires Zn(2+) as cofactor.

It localises to the cytoplasm. The enzyme catalyses N(6)-carboxybiotinyl-L-lysyl-[protein] + acetyl-CoA = N(6)-biotinyl-L-lysyl-[protein] + malonyl-CoA. Its pathway is lipid metabolism; malonyl-CoA biosynthesis; malonyl-CoA from acetyl-CoA: step 1/1. Component of the acetyl coenzyme A carboxylase (ACC) complex. Biotin carboxylase (BC) catalyzes the carboxylation of biotin on its carrier protein (BCCP) and then the CO(2) group is transferred by the transcarboxylase to acetyl-CoA to form malonyl-CoA. The chain is Acetyl-coenzyme A carboxylase carboxyl transferase subunit beta from Streptococcus sanguinis (strain SK36).